Reading from the N-terminus, the 314-residue chain is Peroxidase 2 (314 aa).

Residues 1–23 form the signal peptide; sequence MASASSVSLMLLVAAAMASAASA. Position 24 is a pyrrolidone carboxylic acid (Gln-24). Intrachain disulfides connect Cys-34–Cys-109, Cys-67–Cys-72, Cys-115–Cys-310, and Cys-194–Cys-219. His-65 serves as the catalytic Proton acceptor. Residues Asp-66, Val-69, Gly-71, Asp-73, and Ser-75 each coordinate Ca(2+). N-linked (GlcNAc...) asparagine glycosylation occurs at Asn-148. Residue Pro-157 participates in substrate binding. N-linked (GlcNAc...) asparagine glycosylation is present at Asn-169. Position 187 (His-187) interacts with heme b. Thr-188 provides a ligand contact to Ca(2+). N-linked (GlcNAc...) asparagine glycosylation occurs at Asn-203. Asp-234, Thr-237, and Asp-242 together coordinate Ca(2+). N-linked (GlcNAc...) asparagine glycans are attached at residues Asn-274 and Asn-309.

This sequence belongs to the peroxidase family. Classical plant (class III) peroxidase subfamily. Requires Ca(2+) as cofactor. It depends on heme b as a cofactor.

It is found in the secreted. It carries out the reaction 2 a phenolic donor + H2O2 = 2 a phenolic radical donor + 2 H2O. In terms of biological role, removal of H(2)O(2), oxidation of toxic reductants, biosynthesis and degradation of lignin, suberization, auxin catabolism, response to environmental stresses such as wounding, pathogen attack and oxidative stress. These functions might be dependent on each isozyme/isoform in each plant tissue. This is Peroxidase 2 (PRX112) from Oryza sativa subsp. japonica (Rice).